The primary structure comprises 218 residues: Capsid protein (218 aa).

N-acetylmethionine; by host is present on Met1. The segment covering 1-10 has biased composition (low complexity); the sequence is MDKSESTSAG. Residues 1–30 are disordered; sequence MDKSESTSAGRNRRRRLRRGSRSASSSSDA. Basic residues predominate over residues 11-21; it reads RNRRRRLRRGS.

Belongs to the cucumovirus capsid protein family.

It is found in the virion. Its function is as follows. Capsid protein. Probably binds RNA and plays a role in packaging. This is Capsid protein from Cucumber mosaic virus (strain Y) (CMV).